We begin with the raw amino-acid sequence, 376 residues long: MSTFGKLFRVTTYGESHCKSVGCIVDGVPPGMSLTEADIQPQLTRRRPGQSKLSTPRDEKDRVEIQSGTEFGKTLGTPIAMMIKNEDQRPHDYSDMDKFPRPSHADFTYSEKYGIKASSGGGRASARETIGRVASGAIAEKFLAQNSNVEIVAFVTQIGEIKMNRDSFDPEFQHLLNTITREKVDSMGPIRCPDASVAGLMVKEIEKYRGNKDSIGGVVTCVVRNLPTGLGEPCFDKLEAMLAHAMLSIPASKGFEIGSGFQGVSVPGSKHNDPFYFEKETNRLRTKTNNSGGVQGGISNGENIYFSVPFKSVATISQEQKTATYDGEEGILAAKGRHDPAVTPRAIPIVEAMTALVLADALLIQKARDFSRSVVH.

S2 bears the N-acetylserine mark. Residue H17 is part of the active site. The interval 39–61 is disordered; the sequence is IQPQLTRRRPGQSKLSTPRDEKD. Residues H104 and D339 contribute to the active site.

The protein belongs to the chorismate synthase family. Homotetramer.

The enzyme catalyses 5-O-(1-carboxyvinyl)-3-phosphoshikimate = chorismate + phosphate. It catalyses the reaction FMNH2 + NADP(+) = FMN + NADPH + 2 H(+). It participates in metabolic intermediate biosynthesis; chorismate biosynthesis; chorismate from D-erythrose 4-phosphate and phosphoenolpyruvate: step 7/7. Bifunctional chorismate synthase and flavin reductase that catalyzes the conversion of 5-enolpyruvylshikimate 3-phosphate (EPSP) to form chorismate, which is the last common intermediate in the synthesis of the three aromatic amino acids phenylalanine, tyrosine and tryptophan. Also acts as a flavin reductase (FR) able to generate reduced flavin mononucleotide in the presence of NADPH. This Saccharomyces cerevisiae (strain ATCC 204508 / S288c) (Baker's yeast) protein is Chorismate synthase ARO2.